The sequence spans 288 residues: NAD(P)H-hydrate epimerase (288 aa).

Residues 1 to 59 (MSGLRALLGLGLPVAGSRLPRVRVQAGACRARPTWWGPQRLISGGRGDVEGMASSAVKY) constitute a mitochondrion transit peptide. In terms of domain architecture, YjeF N-terminal spans 65–275 (AQAVDQELFN…ALEKKYQLNL (211 aa)). 119 to 123 (NNGGD) serves as a coordination point for (6S)-NADPHX. Asn-120 provides a ligand contact to K(+). Lys-144 carries the N6-succinyllysine modification. Residue Asp-185 coordinates K(+). (6S)-NADPHX-binding positions include 189–195 (GFSFKGE) and Asp-218. Ser-221 serves as a coordination point for K(+).

The protein belongs to the NnrE/AIBP family. In terms of assembly, homodimer. Interacts with APOA1 and APOA2. Requires K(+) as cofactor. Post-translationally, undergoes physiological phosphorylation during sperm capacitation, downstream to PKA activation.

The protein resides in the mitochondrion. Its subcellular location is the secreted. The catalysed reaction is (6R)-NADHX = (6S)-NADHX. The enzyme catalyses (6R)-NADPHX = (6S)-NADPHX. Functionally, catalyzes the epimerization of the S- and R-forms of NAD(P)HX, a damaged form of NAD(P)H that is a result of enzymatic or heat-dependent hydration. This is a prerequisite for the S-specific NAD(P)H-hydrate dehydratase to allow the repair of both epimers of NAD(P)HX. Accelerates cholesterol efflux from endothelial cells to high-density lipoprotein (HDL) and thereby regulates angiogenesis. The chain is NAD(P)H-hydrate epimerase from Sus scrofa (Pig).